We begin with the raw amino-acid sequence, 394 residues long: Xylose isomerase (394 aa).

Catalysis depends on residues His54 and Asp57. Residues Glu181, Glu217, His220, Asp245, Asp255, Asp257, and Asp292 each coordinate Mg(2+).

Belongs to the xylose isomerase family. As to quaternary structure, homotetramer. It depends on Mg(2+) as a cofactor.

Its subcellular location is the cytoplasm. It carries out the reaction alpha-D-xylose = alpha-D-xylulofuranose. The polypeptide is Xylose isomerase (xylA) (Actinoplanes missouriensis (strain ATCC 14538 / DSM 43046 / CBS 188.64 / JCM 3121 / NBRC 102363 / NCIMB 12654 / NRRL B-3342 / UNCC 431)).